Here is a 308-residue protein sequence, read N- to C-terminus: Oxygen-dependent coproporphyrinogen-III oxidase (308 aa).

Ser-100 is a binding site for substrate. A divalent metal cation is bound by residues His-104 and His-114. Catalysis depends on His-114, which acts as the Proton donor. 116–118 (NFR) serves as a coordination point for substrate. 2 residues coordinate a divalent metal cation: His-153 and His-183. The important for dimerization stretch occupies residues 248–283 (YVEFNLVFDRGTIFGLQSGGRTESILSSMPPMATWK). Position 266–268 (266–268 (GGR)) interacts with substrate.

The protein belongs to the aerobic coproporphyrinogen-III oxidase family. As to quaternary structure, homodimer. A divalent metal cation serves as cofactor.

The protein localises to the cytoplasm. It carries out the reaction coproporphyrinogen III + O2 + 2 H(+) = protoporphyrinogen IX + 2 CO2 + 2 H2O. It participates in porphyrin-containing compound metabolism; protoporphyrin-IX biosynthesis; protoporphyrinogen-IX from coproporphyrinogen-III (O2 route): step 1/1. Involved in the heme biosynthesis. Catalyzes the aerobic oxidative decarboxylation of propionate groups of rings A and B of coproporphyrinogen-III to yield the vinyl groups in protoporphyrinogen-IX. In Francisella tularensis subsp. holarctica (strain FTNF002-00 / FTA), this protein is Oxygen-dependent coproporphyrinogen-III oxidase.